The following is a 482-amino-acid chain: Glutamyl-tRNA(Gln) amidotransferase subunit A (482 aa).

Residues Lys75 and Ser150 each act as charge relay system in the active site. Ser174 functions as the Acyl-ester intermediate in the catalytic mechanism.

It belongs to the amidase family. GatA subfamily. In terms of assembly, heterotrimer of A, B and C subunits.

It catalyses the reaction L-glutamyl-tRNA(Gln) + L-glutamine + ATP + H2O = L-glutaminyl-tRNA(Gln) + L-glutamate + ADP + phosphate + H(+). In terms of biological role, allows the formation of correctly charged Gln-tRNA(Gln) through the transamidation of misacylated Glu-tRNA(Gln) in organisms which lack glutaminyl-tRNA synthetase. The reaction takes place in the presence of glutamine and ATP through an activated gamma-phospho-Glu-tRNA(Gln). The sequence is that of Glutamyl-tRNA(Gln) amidotransferase subunit A from Rippkaea orientalis (strain PCC 8801 / RF-1) (Cyanothece sp. (strain PCC 8801)).